Reading from the N-terminus, the 386-residue chain is MKEVVVVDCIRTPMGRSKGGIFRNVRAETLSAHLMSKLIERNPNLDPNEIEDIIWGCVQQTKEQGFNIARNAQLLTDIPRSVAAVTVNRLCGSSMQALHDATSGIMSGRGDVYMIGGVEHMGHVPMDFNIDFHPGIAKTAARASGSMGMTAELLGRQNGISREMQDAFGARSHQKAHAAAVEGRWNEIVATEGHDADGILKLIDADETIRPDSTTESMSGLRPVFDPVNGTVTAGTSSALSDGASAMLIMSADKAKALGLTPRAKIRAMAVAGCDAAIMGFGPVPATQKALKRAGMTMADIELAEFNEAFAAQALSCIKQLGWLDTYEDKVNLNGGAIALGHPLGCSGSRISTTLINLMEANDKSIGLATMCIGLGQGIATVFERV.

Cysteine 91 functions as the Acyl-thioester intermediate in the catalytic mechanism. Residues histidine 342 and cysteine 372 each act as proton acceptor in the active site.

Belongs to the thiolase-like superfamily. Thiolase family. In terms of assembly, heterotetramer of two alpha chains (FadB) and two beta chains (FadA).

The protein localises to the cytoplasm. The enzyme catalyses an acyl-CoA + acetyl-CoA = a 3-oxoacyl-CoA + CoA. Its pathway is lipid metabolism; fatty acid beta-oxidation. Catalyzes the final step of fatty acid oxidation in which acetyl-CoA is released and the CoA ester of a fatty acid two carbons shorter is formed. The polypeptide is 3-ketoacyl-CoA thiolase (Pseudoalteromonas atlantica (strain T6c / ATCC BAA-1087)).